Consider the following 87-residue polypeptide: Mitochondrial import protein 2 (87 aa).

Residues 1 to 53 (MADSEDTSVILQGIDTINSVEGLEEDGYLSDEDTSLSNELADAQRQWEESLQQ) are Cytoplasmic-facing. Residues 54–71 (LNKLLNWVLLPLLGKYIG) form a helical membrane-spanning segment. Residues 72–87 (RRMAKTLWSRFIEHFV) are Mitochondrial intermembrane-facing.

Belongs to the MIM2 family. In terms of assembly, component of the MIM complex containing at least MIM1 and MIM2. Interacts with MIM1; interaction is direct.

The protein localises to the mitochondrion outer membrane. Functionally, component of the MIM complex required for outer membrane protein import. Involved in import of the subset of proteins with multiple alpha-helical transmembrane segments, including UGO1, TOM20 and FZO1. The sequence is that of Mitochondrial import protein 2 from Saccharomyces cerevisiae (strain ATCC 204508 / S288c) (Baker's yeast).